The following is a 669-amino-acid chain: DNA ligase (669 aa).

Residues 34–38, 83–84, and Glu-114 contribute to the NAD(+) site; these read DAEYD and SL. The active-site N6-AMP-lysine intermediate is the Lys-116. NAD(+) contacts are provided by Arg-137, Glu-171, Lys-287, and Lys-311. Residues Cys-405, Cys-408, Cys-423, and Cys-428 each coordinate Zn(2+). The region spanning 591-669 is the BRCT domain; sequence NVESYFAGKT…EERFLQELNK (79 aa).

This sequence belongs to the NAD-dependent DNA ligase family. LigA subfamily. Mg(2+) is required as a cofactor. The cofactor is Mn(2+).

It catalyses the reaction NAD(+) + (deoxyribonucleotide)n-3'-hydroxyl + 5'-phospho-(deoxyribonucleotide)m = (deoxyribonucleotide)n+m + AMP + beta-nicotinamide D-nucleotide.. In terms of biological role, DNA ligase that catalyzes the formation of phosphodiester linkages between 5'-phosphoryl and 3'-hydroxyl groups in double-stranded DNA using NAD as a coenzyme and as the energy source for the reaction. It is essential for DNA replication and repair of damaged DNA. This chain is DNA ligase, found in Bacillus cereus (strain B4264).